The primary structure comprises 770 residues: MSPKTLYDKVFEDHIVYEDESGSNLLYIDRHLVHEVTSPQAFEGLKNAGRTVRRTDCTLATVDHNIPTISRVNFKTLLTFIDQDDSRLQVQTLEQNVKDFDVTYFGMTDDRQGIVHVVGPEQGFTLPGTTVVCGDSHTSTHGAFGALAFGIGTSEVEHVLATQTTIQANPKNMRITIDGELSEGITSKDLVLHVIGVIGTAGGTGCVIEFAGKAIEDLSMEARMSICNMAIEAGARAGMIKPDEKTFEYIKGRPLAPKGDEWEKALKYWKTLHTDDGAKLHYDIKIAASDIVPTITWGNSPQDALPITASVPDPANVSDPIKKSGMERALKYQGLTPNTPFVVIKMHKAFIGSCTNSRIEDLRAAAKVAKGHKKADNVKLVLVVPGSGLIKKQAEKEGLDKIFESAGFTWREAGCSMCLGMNPDILDPEERCASTSNRNFEGRQGARSRTHLMSPAMAAAAAIKGHFTDIREFDYVDNDEPSITIEHEVEDKELQDAVYEHEKEIIEGTPGTEAERSTTSLKMNQNSKKPNQMLIKMVPITVLPFLTGITAPLYKANVDTDAIIPKQFLKTIKRTGLKNGLFYESRFVKMPMVRCQTDFVLNVEPYRQAEILLVTGDNFGCGSSREHAPWALKDFGIKSIIAPSFGDIFYNNSFKNFLLPIRIPQDVIESKLVPVVKAGHKLTIDLPNQQIKDGETGDVLIEKFDVEEFRKHCLVNGLDDIGLTLQKEEYIQEYEAKRREKFSFLEGGSKLIKPIKGTKKSIYGNKAQEW.

3 residues coordinate [4Fe-4S] cluster: C354, C415, and C418.

The protein belongs to the aconitase/IPM isomerase family. Monomer. [4Fe-4S] cluster is required as a cofactor.

The enzyme catalyses (2R,3S)-3-isopropylmalate = (2S)-2-isopropylmalate. It functions in the pathway amino-acid biosynthesis; L-leucine biosynthesis; L-leucine from 3-methyl-2-oxobutanoate: step 2/4. Catalyzes the isomerization between 2-isopropylmalate and 3-isopropylmalate, via the formation of 2-isopropylmaleate. This is 3-isopropylmalate dehydratase (LEU1) from Candida maltosa (Yeast).